Consider the following 368-residue polypeptide: Peptide chain release factor 2 (368 aa).

At Q250 the chain carries N5-methylglutamine.

This sequence belongs to the prokaryotic/mitochondrial release factor family. In terms of processing, methylated by PrmC. Methylation increases the termination efficiency of RF2.

Its subcellular location is the cytoplasm. Its function is as follows. Peptide chain release factor 2 directs the termination of translation in response to the peptide chain termination codons UGA and UAA. This is Peptide chain release factor 2 from Rickettsia conorii (strain ATCC VR-613 / Malish 7).